Reading from the N-terminus, the 88-residue chain is Small ribosomal subunit protein uS17 (88 aa).

This sequence belongs to the universal ribosomal protein uS17 family. As to quaternary structure, part of the 30S ribosomal subunit.

In terms of biological role, one of the primary rRNA binding proteins, it binds specifically to the 5'-end of 16S ribosomal RNA. This chain is Small ribosomal subunit protein uS17, found in Ligilactobacillus salivarius (strain UCC118) (Lactobacillus salivarius).